Consider the following 225-residue polypeptide: NAD(P)H-quinone oxidoreductase subunit K, chloroplastic (225 aa).

Cys-43, Cys-44, Cys-108, and Cys-139 together coordinate [4Fe-4S] cluster.

It belongs to the complex I 20 kDa subunit family. NDH is composed of at least 16 different subunits, 5 of which are encoded in the nucleus. [4Fe-4S] cluster is required as a cofactor.

The protein resides in the plastid. The protein localises to the chloroplast thylakoid membrane. The catalysed reaction is a plastoquinone + NADH + (n+1) H(+)(in) = a plastoquinol + NAD(+) + n H(+)(out). The enzyme catalyses a plastoquinone + NADPH + (n+1) H(+)(in) = a plastoquinol + NADP(+) + n H(+)(out). Functionally, NDH shuttles electrons from NAD(P)H:plastoquinone, via FMN and iron-sulfur (Fe-S) centers, to quinones in the photosynthetic chain and possibly in a chloroplast respiratory chain. The immediate electron acceptor for the enzyme in this species is believed to be plastoquinone. Couples the redox reaction to proton translocation, and thus conserves the redox energy in a proton gradient. The polypeptide is NAD(P)H-quinone oxidoreductase subunit K, chloroplastic (Oryza nivara (Indian wild rice)).